Here is a 322-residue protein sequence, read N- to C-terminus: Arginase-1 (322 aa).

Residues 1-27 form a disordered region; the sequence is MSFKSQSIGIIGAPFSKGQPRGGVEEG. Residue serine 7 is modified to Phosphoserine. Position 17 is an N6-succinyllysine (lysine 17). The residue at position 72 (serine 72) is a Phosphoserine. Position 75 is an N6-succinyllysine (lysine 75). Mn(2+) is bound by residues histidine 101, aspartate 124, histidine 126, and aspartate 128. Substrate contacts are provided by residues 126–130 and 137–139; these read HTDIN and TGN. Serine 163 carries the post-translational modification Phosphoserine. Position 183 (aspartate 183) interacts with substrate. Serine 217 is modified (phosphoserine). Positions 232 and 234 each coordinate Mn(2+). The substrate site is built by threonine 246 and glutamate 277.

This sequence belongs to the arginase family. Homotrimer. Interacts with CMTM6. It depends on Mn(2+) as a cofactor.

It is found in the cytoplasm. The catalysed reaction is L-arginine + H2O = urea + L-ornithine. It functions in the pathway nitrogen metabolism; urea cycle; L-ornithine and urea from L-arginine: step 1/1. This is Arginase-1 (ARG1) from Sus scrofa (Pig).